The following is a 122-amino-acid chain: Ribosomal protein eL22-like (122 aa).

Residues serine 112, serine 118, and serine 120 each carry the phosphoserine modification.

It belongs to the eukaryotic ribosomal protein eL22 family.

The protein is Ribosomal protein eL22-like (RPL22L1) of Bos taurus (Bovine).